Reading from the N-terminus, the 156-residue chain is Endoribonuclease YbeY (156 aa).

The Zn(2+) site is built by H122, H126, and H132.

The protein belongs to the endoribonuclease YbeY family. Zn(2+) serves as cofactor.

The protein resides in the cytoplasm. In terms of biological role, single strand-specific metallo-endoribonuclease involved in late-stage 70S ribosome quality control and in maturation of the 3' terminus of the 16S rRNA. The chain is Endoribonuclease YbeY from Geobacillus sp. (strain WCH70).